Here is a 234-residue protein sequence, read N- to C-terminus: uncharacterized protein (234 aa).

The segment at 199–234 is disordered; the sequence is DNQNEPLENYSDDNNFSNFDETEHVDDSEMNDDNFI.

This is an uncharacterized protein from Buchnera aphidicola subsp. Schizaphis graminum (strain Sg).